Here is a 21-residue protein sequence, read N- to C-terminus: Buforin-2 (21 aa).

The residue at position 21 (Lys21) is an N6-(2-hydroxyisobutyryl)lysine; alternate.

It belongs to the histone H2A family. Expressed by the skin glands.

The protein localises to the secreted. Functionally, antimicrobial peptide with potent activity against some Gram-positive and Gram-negative bacteria. Does not permeabilize membrane, but internalizes into bacterial cells and alter specific gene expression involved in bacterial resistance mechanisms. Has the ability to agglutinate E.coli, and lipid vesicles. Shows a weak hemolytic activity, and is not cytotoxic to monocytes. The sequence is that of Buforin-2 from Sphaenorhynchus lacteus (Orinoco lime treefrog).